The primary structure comprises 124 residues: ATP synthase epsilon chain (124 aa).

The segment at 97–124 (ARVREASSEEEKSRAESELRAVKRSKEK) is disordered.

The protein belongs to the ATPase epsilon chain family. In terms of assembly, F-type ATPases have 2 components, CF(1) - the catalytic core - and CF(0) - the membrane proton channel. CF(1) has five subunits: alpha(3), beta(3), gamma(1), delta(1), epsilon(1). CF(0) has three main subunits: a, b and c.

It is found in the cell membrane. In terms of biological role, produces ATP from ADP in the presence of a proton gradient across the membrane. The protein is ATP synthase epsilon chain of Corynebacterium urealyticum (strain ATCC 43042 / DSM 7109).